We begin with the raw amino-acid sequence, 208 residues long: Small ribosomal subunit protein uS4 (208 aa).

The 61-residue stretch at 98-158 (RRLDNIAYRL…EKSRKVACIN (61 aa)) folds into the S4 RNA-binding domain.

It belongs to the universal ribosomal protein uS4 family. Part of the 30S ribosomal subunit. Contacts protein S5. The interaction surface between S4 and S5 is involved in control of translational fidelity.

One of the primary rRNA binding proteins, it binds directly to 16S rRNA where it nucleates assembly of the body of the 30S subunit. Functionally, with S5 and S12 plays an important role in translational accuracy. This chain is Small ribosomal subunit protein uS4, found in Geotalea uraniireducens (strain Rf4) (Geobacter uraniireducens).